The following is a 199-amino-acid chain: Transcriptional regulatory protein DesR (199 aa).

A Response regulatory domain is found at 3-117; sequence SIFIAEDQQM…ELANAIRSVM (115 aa). A 4-aspartylphosphate modification is found at Asp54. An HTH luxR-type domain is found at 131–196; that stretch reads LYSEANPLTD…EAITRSKEKG (66 aa). A DNA-binding region (H-T-H motif) is located at residues 155–174; sequence TKEIAQELSIKSGTVRNYIS.

Post-translationally, phosphorylated by DesK.

Its subcellular location is the cytoplasm. In terms of biological role, member of the two-component regulatory system DesR/DesK, responsible for cold induction of the des gene coding for the Delta5 acyl-lipid desaturase. This is Transcriptional regulatory protein DesR (desR) from Bacillus subtilis (strain 168).